The sequence spans 363 residues: 3-isopropylmalate dehydrogenase (363 aa).

NAD(+) is bound at residue 78-91 (GKKWDDLPINQRPE). Substrate is bound by residues R99, R109, R138, and D227. Residues D227, D251, and D255 each contribute to the Mg(2+) site. 285 to 297 (GSAPDIEGKNIAN) serves as a coordination point for NAD(+).

The protein belongs to the isocitrate and isopropylmalate dehydrogenases family. LeuB type 1 subfamily. Homodimer. Mg(2+) serves as cofactor. Mn(2+) is required as a cofactor.

The protein resides in the cytoplasm. The enzyme catalyses (2R,3S)-3-isopropylmalate + NAD(+) = 4-methyl-2-oxopentanoate + CO2 + NADH. The protein operates within amino-acid biosynthesis; L-leucine biosynthesis; L-leucine from 3-methyl-2-oxobutanoate: step 3/4. In terms of biological role, catalyzes the oxidation of 3-carboxy-2-hydroxy-4-methylpentanoate (3-isopropylmalate) to 3-carboxy-4-methyl-2-oxopentanoate. The product decarboxylates to 4-methyl-2 oxopentanoate. The protein is 3-isopropylmalate dehydrogenase of Buchnera aphidicola subsp. Uroleucon rudbeckiae.